The chain runs to 483 residues: Betaine aldehyde dehydrogenase (483 aa).

Positions 27 and 93 each coordinate K(+). Position 149 to 151 (G149 to W151) interacts with NAD(+). K161 (charge relay system) is an active-site residue. NAD(+) is bound at residue K175–E178. V179 serves as a coordination point for K(+). Residue S228–T231 participates in NAD(+) binding. Residue V243 participates in K(+) binding. Residue E249 is the Proton acceptor of the active site. 3 residues coordinate NAD(+): G251, C283, and E380. The active-site Nucleophile is C283. The residue at position 283 (C283) is a Cysteine sulfenic acid (-SOH). K450 and G453 together coordinate K(+). Residue E457 is the Charge relay system of the active site.

The protein belongs to the aldehyde dehydrogenase family. In terms of assembly, dimer of dimers. The cofactor is K(+).

It catalyses the reaction betaine aldehyde + NAD(+) + H2O = glycine betaine + NADH + 2 H(+). The protein operates within amine and polyamine biosynthesis; betaine biosynthesis via choline pathway; betaine from betaine aldehyde: step 1/1. Functionally, involved in the biosynthesis of the osmoprotectant glycine betaine. Catalyzes the irreversible oxidation of betaine aldehyde to the corresponding acid. This is Betaine aldehyde dehydrogenase from Cereibacter sphaeroides (strain ATCC 17025 / ATH 2.4.3) (Rhodobacter sphaeroides).